We begin with the raw amino-acid sequence, 882 residues long: Envelope glycoprotein gp160 (882 aa).

Positions 1-22 (MGCLGNQLLIAILLLSVYGIYC) are cleaved as a signal peptide. Over 23–697 (IQYVTVFYGV…TSWIKYIQYG (675 aa)) the chain is Extracellular. N37 is a glycosylation site (N-linked (GlcNAc...) asparagine; by host). C44 and C57 form a disulfide bridge. N-linked (GlcNAc...) asparagine; by host glycosylation is found at N70, N114, N149, N159, N174, N187, N201, N205, N215, N247, N250, N257, N281, N287, N298, N309, N319, N374, and N380. Cystine bridges form between C101-C223, C108-C214, C113-C171, C236-C266, and C246-C258. Positions 113–170 (CNKSETDKWGLTKSSTTTASTTTTTTAKSVETRDIVNETSPCVVHDNCTGLEQEPMIS) are V1. A V2 region spans residues 171-214 (CKFNMTGLKRDKKKEYNETWYSADLVCEQGNSTGNESRCYMNHC). Positions 314-346 (CRRPGNKTVLPVTIMSALVFHSQPVNERPKQAW) are V3. Cysteines 314 and 347 form a disulfide. Cystine bridges form between C398-C462 and C405-C435. The interval 405 to 435 (CKMNWFLNWVEDRSLTTQKPKERHKRNYVPC) is V4. N-linked (GlcNAc...) asparagine; by host glycans are attached at residues N463, N474, and N479. Positions 478 to 485 (GNQTSITM) are V5. A fusion peptide region spans residues 529–549 (GVFVLGFLGFLATAGSAMGAA). Residues 592–608 (LQTRVSAIEKYLKDQAQ) are immunosuppression. N-linked (GlcNAc...) asparagine; by host glycosylation is found at N628, N637, and N653. Residues 637-669 (NETWQEWERKVDFLEANITALLEEAQIQQEKNM) adopt a coiled-coil conformation. The tract at residues 674–695 (KLNSWDVFGNWFDLTSWIKYIQ) is MPER; binding to GalCer. Residues 698–718 (IYIIVGVILLRIVIYIVQMLA) traverse the membrane as a helical segment. Residues 719-882 (RLRQGYRPVF…IRQGLELTLL (164 aa)) lie on the Cytoplasmic side of the membrane. The YXXV motif; contains endocytosis signal signature appears at 724–727 (YRPV). The tract at residues 738 to 761 (THTQQDPALPTKEGKKGDGGGSGG) is disordered. C790 is lipidated: S-palmitoyl cysteine; by host. A Di-leucine internalization motif motif is present at residues 881 to 882 (LL).

The mature envelope protein (Env) consists of a homotrimer of non-covalently associated gp120-gp41 heterodimers. The resulting complex protrudes from the virus surface as a spike. Interacts with host CD4 and CCR5. Gp120 also interacts with the C-type lectins CD209/DC-SIGN and CLEC4M/DC-SIGNR (collectively referred to as DC-SIGN(R)). In terms of assembly, the mature envelope protein (Env) consists of a homotrimer of non-covalently associated gp120-gp41 heterodimers. The resulting complex protrudes from the virus surface as a spike. In terms of processing, specific enzymatic cleavages in vivo yield mature proteins. Envelope glycoproteins are synthesized as an inactive precursor that is heavily N-glycosylated and processed likely by host cell furin in the Golgi to yield the mature SU and TM proteins. The cleavage site between SU and TM requires the minimal sequence [KR]-X-[KR]-R. Palmitoylation of the transmembrane protein and of Env polyprotein (prior to its proteolytic cleavage) is essential for their association with host cell membrane lipid rafts. Palmitoylation is therefore required for envelope trafficking to classical lipid rafts, but not for viral replication.

It is found in the virion membrane. It localises to the host cell membrane. The protein localises to the host endosome membrane. The surface protein gp120 (SU) attaches the virus to the host lymphoid cell by binding to the primary receptor CD4. This interaction induces a structural rearrangement creating a high affinity binding site for a chemokine coreceptor like CCR5. This peculiar 2 stage receptor-interaction strategy allows gp120 to maintain the highly conserved coreceptor-binding site in a cryptic conformation, protected from neutralizing antibodies. These changes are transmitted to the transmembrane protein gp41 and are thought to activate its fusogenic potential by unmasking its fusion peptide. Its function is as follows. Surface protein gp120 (SU) may target the virus to gut-associated lymphoid tissue (GALT) by binding host ITGA4/ITGB7 (alpha-4/beta-7 integrins), a complex that mediates T-cell migration to the GALT. Interaction between gp120 and ITGA4/ITGB7 would allow the virus to enter GALT early in the infection, infecting and killing most of GALT's resting CD4+ T-cells. This T-cell depletion is believed to be the major insult to the host immune system leading to AIDS. Functionally, the surface protein gp120 is a ligand for CD209/DC-SIGN and CLEC4M/DC-SIGNR, which are respectively found on dendritic cells (DCs), and on endothelial cells of liver sinusoids and lymph node sinuses. These interactions allow capture of viral particles at mucosal surfaces by these cells and subsequent transmission to permissive cells. DCs are professional antigen presenting cells, critical for host immunity by inducing specific immune responses against a broad variety of pathogens. They act as sentinels in various tissues where they take up antigen, process it, and present it to T-cells following migration to lymphoid organs. SIV subverts the migration properties of dendritic cells to gain access to CD4+ T-cells in lymph nodes. Virus transmission to permissive T-cells occurs either in trans (without DCs infection, through viral capture and transmission), or in cis (following DCs productive infection, through the usual CD4-gp120 interaction), thereby inducing a robust infection. In trans infection, bound virions remain infectious over days and it is proposed that they are not degraded, but protected in non-lysosomal acidic organelles within the DCs close to the cell membrane thus contributing to the viral infectious potential during DCs' migration from the periphery to the lymphoid tissues. On arrival at lymphoid tissues, intact virions recycle back to DCs' cell surface allowing virus transmission to CD4+ T-cells. Virion capture also seems to lead to MHC-II-restricted viral antigen presentation, and probably to the activation of SIV-specific CD4+ cells. In terms of biological role, the transmembrane protein gp41 (TM) acts as a class I viral fusion protein. Under the current model, the protein has at least 3 conformational states: pre-fusion native state, pre-hairpin intermediate state, and post-fusion hairpin state. During fusion of viral and target intracellular membranes, the coiled coil regions (heptad repeats) assume a trimer-of-hairpins structure, positioning the fusion peptide in close proximity to the C-terminal region of the ectodomain. The formation of this structure appears to drive apposition and subsequent fusion of viral and target cell membranes. Complete fusion occurs in host cell endosomes. The virus undergoes clathrin-dependent internalization long before endosomal fusion, thus minimizing the surface exposure of conserved viral epitopes during fusion and reducing the efficacy of inhibitors targeting these epitopes. Membranes fusion leads to delivery of the nucleocapsid into the cytoplasm. The envelope glycoprotein gp160 precursor down-modulates cell surface CD4 antigen by interacting with it in the endoplasmic reticulum and blocking its transport to the cell surface. Its function is as follows. The gp120-gp41 heterodimer allows rapid transcytosis of the virus through CD4 negative cells such as simple epithelial monolayers of the intestinal, rectal and endocervical epithelial barriers. Both gp120 and gp41 specifically recognize glycosphingolipids galactosyl-ceramide (GalCer) or 3' sulfo-galactosyl-ceramide (GalS) present in the lipid rafts structures of epithelial cells. Binding to these alternative receptors allows the rapid transcytosis of the virus through the epithelial cells. This transcytotic vesicle-mediated transport of virions from the apical side to the basolateral side of the epithelial cells does not involve infection of the cells themselves. In Simian immunodeficiency virus (isolate Mm142-83) (SIV-mac), this protein is Envelope glycoprotein gp160 (env).